The following is a 412-amino-acid chain: CCA-adding enzyme (412 aa).

ATP contacts are provided by S41 and K44. Positions 41 and 44 each coordinate CTP. The Mg(2+) site is built by D53, D55, and D106. ATP is bound by residues H129, K149, and Y158. The CTP site is built by H129, K149, and Y158.

Belongs to the tRNA nucleotidyltransferase/poly(A) polymerase family. Archaeal CCA-adding enzyme subfamily. Homodimer. Mg(2+) is required as a cofactor.

It catalyses the reaction a tRNA precursor + 2 CTP + ATP = a tRNA with a 3' CCA end + 3 diphosphate. It carries out the reaction a tRNA with a 3' CCA end + 2 CTP + ATP = a tRNA with a 3' CCACCA end + 3 diphosphate. Functionally, catalyzes the addition and repair of the essential 3'-terminal CCA sequence in tRNAs without using a nucleic acid template. Adds these three nucleotides in the order of C, C, and A to the tRNA nucleotide-73, using CTP and ATP as substrates and producing inorganic pyrophosphate. tRNA 3'-terminal CCA addition is required both for tRNA processing and repair. Also involved in tRNA surveillance by mediating tandem CCA addition to generate a CCACCA at the 3' terminus of unstable tRNAs. While stable tRNAs receive only 3'-terminal CCA, unstable tRNAs are marked with CCACCA and rapidly degraded. The sequence is that of CCA-adding enzyme from Saccharolobus islandicus (strain M.16.27) (Sulfolobus islandicus).